Reading from the N-terminus, the 249-residue chain is MKNNYTSLKSPLDEEDELKTDHEIDLEKGPLPEYDSEEEGALPPYSDHALVNNPLNTHRENHSYGTTDNSSPLLIILLISFTSIILFNAPAFCYLKYKDAFFKNYGAAEWTLFGFWCLVCTLALIFLTYFYETWSKACGKGIKHFLKNWRNMIFAFCKSSLFCLVLLKAENKLSSHLGDQRWGWKCSASAFTFMAVSSILIFIAETVEPGSCSTDLVKRTLAFYGYEIRQHVNEDATILLREMNPESEA.

The tract at residues 1 to 40 (MKNNYTSLKSPLDEEDELKTDHEIDLEKGPLPEYDSEEEG) is disordered. Basic and acidic residues predominate over residues 19–30 (KTDHEIDLEKGP). 4 consecutive transmembrane segments (helical) span residues 73–93 (LLII…PAFC), 110–130 (WTLF…LTYF), 151–170 (NMIF…LKAE), and 187–207 (SASA…AETV).

Belongs to the WTF family. In terms of assembly, homomer. Interacts with other proteins that exhibit high sequence similarity.

The protein resides in the spore membrane. It is found in the vacuole membrane. In terms of biological role, acts as a suppressor component of the dual wtf meiotic drive system, and can suppress but not confer meiotic drive by compatible poisons. Wtf meiotic drive systems promote unequal transmission of alleles from the parental zygote to progeny spores by encoding a poison and an antidote from the same locus; the poison is trans-acting and forms toxic aggregates in all spores within an ascus, wherease the antidote is spore-specific and targets aggregates for degradation by the vacuole. Meiotic drive by wtf systems therefore lead to poisoning of all progeny that do not inherit the dual poison/antidote allele, or express a compatible antidote. This is Meiotic drive suppressor wtf25 from Schizosaccharomyces pombe (strain 972 / ATCC 24843) (Fission yeast).